The following is a 184-amino-acid chain: MQQFAKDILASLEIKMTQAQELMLKNFCDIRTGTANPNILDKITVNYYGATTFLKTLASISVSEGNQINIKPYDSNLIPNIKKVLLASNLGITPQTDGVVVRLVFPKPTEERRKALMKEVEQLSEKTKVAIRNVRREGNDKIKKVELTKDLETFYLNQIQTLTDKNIKLIDKQTATKNIELSKA.

Belongs to the RRF family.

Its subcellular location is the cytoplasm. Responsible for the release of ribosomes from messenger RNA at the termination of protein biosynthesis. May increase the efficiency of translation by recycling ribosomes from one round of translation to another. The protein is Ribosome-recycling factor of Aster yellows witches'-broom phytoplasma (strain AYWB).